A 710-amino-acid chain; its full sequence is Elongation factor G (710 aa).

The region spanning 8 to 290 (SQYRNIGISA…AIVEYLPSPM (283 aa)) is the tr-type G domain. Residues 17-24 (AHIDAGKT), 88-92 (DTPGH), and 142-145 (NKMD) each bind GTP.

Belongs to the TRAFAC class translation factor GTPase superfamily. Classic translation factor GTPase family. EF-G/EF-2 subfamily.

It localises to the cytoplasm. Functionally, catalyzes the GTP-dependent ribosomal translocation step during translation elongation. During this step, the ribosome changes from the pre-translocational (PRE) to the post-translocational (POST) state as the newly formed A-site-bound peptidyl-tRNA and P-site-bound deacylated tRNA move to the P and E sites, respectively. Catalyzes the coordinated movement of the two tRNA molecules, the mRNA and conformational changes in the ribosome. In Buchnera aphidicola subsp. Baizongia pistaciae (strain Bp), this protein is Elongation factor G.